Consider the following 428-residue polypeptide: Serine--tRNA ligase (428 aa).

L-serine is bound at residue 235 to 237; sequence TAE. 266–268 is an ATP binding site; the sequence is RSE. Residue E289 coordinates L-serine. ATP is bound at residue 353-356; it reads EISS. An L-serine-binding site is contributed by S389.

Belongs to the class-II aminoacyl-tRNA synthetase family. Type-1 seryl-tRNA synthetase subfamily. Homodimer. The tRNA molecule binds across the dimer.

The protein localises to the cytoplasm. The enzyme catalyses tRNA(Ser) + L-serine + ATP = L-seryl-tRNA(Ser) + AMP + diphosphate + H(+). It carries out the reaction tRNA(Sec) + L-serine + ATP = L-seryl-tRNA(Sec) + AMP + diphosphate + H(+). The protein operates within aminoacyl-tRNA biosynthesis; selenocysteinyl-tRNA(Sec) biosynthesis; L-seryl-tRNA(Sec) from L-serine and tRNA(Sec): step 1/1. Functionally, catalyzes the attachment of serine to tRNA(Ser). Is also able to aminoacylate tRNA(Sec) with serine, to form the misacylated tRNA L-seryl-tRNA(Sec), which will be further converted into selenocysteinyl-tRNA(Sec). The chain is Serine--tRNA ligase from Shewanella denitrificans (strain OS217 / ATCC BAA-1090 / DSM 15013).